We begin with the raw amino-acid sequence, 485 residues long: Delta(14)-sterol reductase ERG24A (485 aa).

A run of 4 helical transmembrane segments spans residues 18–38 (FFGPPGAFAISFFLPVLVYVF), 77–97 (GLVSWNGTLAVIGYNVLSLIL), 131–151 (LAVLAAGTIAQGAEFPVWTFM), and 155–175 (FIQILSANIIYSYLVSTFVYV). A glycan (N-linked (GlcNAc...) asparagine) is linked at Asn240. The next 4 membrane-spanning stretches (helical) occupy residues 259-279 (ILITAVQALYVFDSWWNEPAI), 285-305 (ITTDGFGMMLAFGDIVWVPYV), 319-339 (SLGPLGLAAMLGLIGLGFYIF), and 431-451 (AQGWGMLITYFYILYFGILLI).

The protein belongs to the ERG4/ERG24 family.

The protein resides in the endoplasmic reticulum membrane. The catalysed reaction is 4,4-dimethyl-5alpha-cholesta-8,24-dien-3beta-ol + NADP(+) = 4,4-dimethyl-5alpha-cholesta-8,14,24-trien-3beta-ol + NADPH + H(+). It functions in the pathway steroid metabolism; ergosterol biosynthesis. In terms of biological role, delta(14)-sterol reductase; part of the third module of ergosterol biosynthesis pathway that includes the late steps of the pathway. Catalyzes the reduction of the C14=C15 double bond within 4,4,24-trimethyl ergosta-8,14,24(28)-trienolto produce 4,4-dimethylfecosterol. The third module or late pathway involves the ergosterol synthesis itself through consecutive reactions that mainly occur in the endoplasmic reticulum (ER) membrane. Firstly, the squalene synthase ERG9 catalyzes the condensation of 2 farnesyl pyrophosphate moieties to form squalene, which is the precursor of all steroids. Squalene synthase is crucial for balancing the incorporation of farnesyl diphosphate (FPP) into sterol and nonsterol isoprene synthesis. Secondly, squalene is converted into lanosterol by the consecutive action of the squalene epoxidase ERG1 and the lanosterol synthase ERG7. Then, the delta(24)-sterol C-methyltransferase ERG6 methylates lanosterol at C-24 to produce eburicol. Eburicol is the substrate of the sterol 14-alpha demethylase encoded by CYP51A, CYP51B and CYP51C, to yield 4,4,24-trimethyl ergosta-8,14,24(28)-trienol. CYP51B encodes the enzyme primarily responsible for sterol 14-alpha-demethylation, and plays an essential role in ascospore formation. CYP51A encodes an additional sterol 14-alpha-demethylase, induced on ergosterol depletion and responsible for the intrinsic variation in azole sensitivity. The third CYP51 isoform, CYP51C, does not encode a sterol 14-alpha-demethylase, but is required for full virulence on host wheat ears. The C-14 reductase ERG24 then reduces the C14=C15 double bond which leads to 4,4-dimethylfecosterol. A sequence of further demethylations at C-4, involving the C-4 demethylation complex containing the C-4 methylsterol oxidases ERG25, the sterol-4-alpha-carboxylate 3-dehydrogenase ERG26 and the 3-keto-steroid reductase ERG27, leads to the production of fecosterol via 4-methylfecosterol. ERG28 has a role as a scaffold to help anchor ERG25, ERG26 and ERG27 to the endoplasmic reticulum. The C-8 sterol isomerase ERG2 then catalyzes the reaction which results in unsaturation at C-7 in the B ring of sterols and thus converts fecosterol to episterol. The sterol-C5-desaturases ERG3A and ERG3BB then catalyze the introduction of a C-5 double bond in the B ring to produce 5-dehydroepisterol. The C-22 sterol desaturases ERG5A and ERG5B further convert 5-dehydroepisterol into ergosta-5,7,22,24(28)-tetraen-3beta-ol by forming the C-22(23) double bond in the sterol side chain. Finally, ergosta-5,7,22,24(28)-tetraen-3beta-ol is substrate of the C-24(28) sterol reductase ERG4 to produce ergosterol. The protein is Delta(14)-sterol reductase ERG24A of Gibberella zeae (strain ATCC MYA-4620 / CBS 123657 / FGSC 9075 / NRRL 31084 / PH-1) (Wheat head blight fungus).